Consider the following 158-residue polypeptide: Transcriptional repressor NrdR (158 aa).

Positions 1–22 (MRCPYCGSEDTQVKDSRPAEDN) are disordered. Residues 3-34 (CPYCGSEDTQVKDSRPAEDNTSIRRRRICPDC) fold into a zinc finger. A compositionally biased stretch (basic and acidic residues) spans 11–22 (TQVKDSRPAEDN). Residues 49 to 139 (LMVIKKTGRK…VYRDFSLAED (91 aa)) enclose the ATP-cone domain.

Belongs to the NrdR family. Zn(2+) is required as a cofactor.

Negatively regulates transcription of bacterial ribonucleotide reductase nrd genes and operons by binding to NrdR-boxes. The chain is Transcriptional repressor NrdR from Rhizobium etli (strain CIAT 652).